The primary structure comprises 475 residues: Aspartyl/glutamyl-tRNA(Asn/Gln) amidotransferase subunit B (475 aa).

The protein belongs to the GatB/GatE family. GatB subfamily. Heterotrimer of A, B and C subunits.

It carries out the reaction L-glutamyl-tRNA(Gln) + L-glutamine + ATP + H2O = L-glutaminyl-tRNA(Gln) + L-glutamate + ADP + phosphate + H(+). It catalyses the reaction L-aspartyl-tRNA(Asn) + L-glutamine + ATP + H2O = L-asparaginyl-tRNA(Asn) + L-glutamate + ADP + phosphate + 2 H(+). Its function is as follows. Allows the formation of correctly charged Asn-tRNA(Asn) or Gln-tRNA(Gln) through the transamidation of misacylated Asp-tRNA(Asn) or Glu-tRNA(Gln) in organisms which lack either or both of asparaginyl-tRNA or glutaminyl-tRNA synthetases. The reaction takes place in the presence of glutamine and ATP through an activated phospho-Asp-tRNA(Asn) or phospho-Glu-tRNA(Gln). This chain is Aspartyl/glutamyl-tRNA(Asn/Gln) amidotransferase subunit B, found in Helicobacter pylori (strain HPAG1).